A 700-amino-acid polypeptide reads, in one-letter code: MARKTPIERYRNIGISAHIDAGKTTTTERILFYTGVNHKIGEVHDGAATMDWMEQEQERGITITSAATTCFWKGMELAFPEHRINIIDTPGHVDFTIEVERSMRVLDGACMVYCAVGGVQPQSETVWRQANKYKVPRLAFVNKMDRTGANFYKVYDQMKVRLKANPVPIVLPIGAEENFTGVIDLIKMKAIIWDEASQGMKFNYEDIPADLQAESQKWRENMVEAAAEASEELMNKYLESGELTEAEIKFGIRTRTIAAEIQPMFCGTAFKNKGVQRMLDGVIDFMPSPIDIPPVPGHDDDDKEVVRRAADDEKFAALAFKLMTDPYVGQLTFVRVYSGVLKSGDSVFNPIRGKKERIGRILQMHANQREEIKEILAGDIAACVGLKEVTTGETLCDPDAIITLEKMIFPEPVISQAVEPKTKADQEKMGIALGRLAQEDPSFRVRTDEESGQTIISGMGELHLEIIVDRMKREFGVEANVGKPQVAYRETIRKPVSDIEGKFVRQSGGKGQYGHVVLKIEPQEPGKGFEFVDAIKGGVVPREFIPAVKKGVEDSLPNGVLAGFPVVDVKVTLTFGSYHEVDSNENAFKMAASLGFKDGCRKASPVILEPMMAVEVETPEDYAGNVMGDLSSRRGMVQGMDDMPGGGKAIKAEVPLSEMFGYSTTLRSMSQGRATYTMEFKHYSEAPKNVADAIITSRAK.

Residues 8–290 (ERYRNIGISA…GVIDFMPSPI (283 aa)) enclose the tr-type G domain. GTP-binding positions include 17-24 (AHIDAGKT), 88-92 (DTPGH), and 142-145 (NKMD).

This sequence belongs to the TRAFAC class translation factor GTPase superfamily. Classic translation factor GTPase family. EF-G/EF-2 subfamily.

Its subcellular location is the cytoplasm. Catalyzes the GTP-dependent ribosomal translocation step during translation elongation. During this step, the ribosome changes from the pre-translocational (PRE) to the post-translocational (POST) state as the newly formed A-site-bound peptidyl-tRNA and P-site-bound deacylated tRNA move to the P and E sites, respectively. Catalyzes the coordinated movement of the two tRNA molecules, the mRNA and conformational changes in the ribosome. The chain is Elongation factor G from Methylibium petroleiphilum (strain ATCC BAA-1232 / LMG 22953 / PM1).